The primary structure comprises 257 residues: MSVPLILTILAGAATFIGAFLGVLGQKTSNRLLAFSLGFAAGIMLLISLMEMLPAALAAEGMSPVLGYGMFIFGLLGYLGLDRMLPHAHPQDLMQKSVQPLPKSIKRTAILLTLGISLHNFPEGIATFVTASSNLELGFGIALAVALHNIPEGLAVVGPVYAATGSKRTAILWAGISGLAEILGGVLAWLILGSMISPVVMAAIMAAVAGIMVALSVDELMPLAKEIDPNNNPSYGVLCGMSVMGFSLVLLQTAGIG.

The next 8 membrane-spanning stretches (helical) occupy residues 5–25 (LILTILAGAATFIGAFLGVLG), 32–52 (LLAFSLGFAAGIMLLISLMEM), 61–81 (GMSPVLGYGMFIFGLLGYLGL), 109–129 (AILLTLGISLHNFPEGIATFV), 137–157 (LGFGIALAVALHNIPEGLAVV), 171–191 (ILWAGISGLAEILGGVLAWLI), 195–215 (MISPVVMAAIMAAVAGIMVAL), and 236–256 (GVLCGMSVMGFSLVLLQTAGI). Asn120 and Glu123 together coordinate Fe(2+). The Zn(2+) site is built by Glu123 and His148. 3 residues coordinate Fe(2+): Asn149, Glu152, and Glu181. Glu152 serves as a coordination point for Zn(2+).

The protein belongs to the ZIP transporter (TC 2.A.5) family. ZupT subfamily.

It is found in the cell inner membrane. It catalyses the reaction Zn(2+)(in) = Zn(2+)(out). In terms of biological role, mediates zinc uptake. May also transport other divalent cations. The polypeptide is Zinc transporter ZupT (Shigella dysenteriae serotype 1 (strain Sd197)).